The chain runs to 236 residues: CDP-diacylglycerol--glycerol-3-phosphate 3-phosphatidyltransferase (236 aa).

A run of 5 helical transmembrane segments spans residues 39-59 (IFIALPTIIFIALDNQLGVLA), 66-86 (ISISLQISLLIGGFLFLTAVI), 120-140 (VLIALAINGYFHFSLLIVFIV), 163-183 (WLGKWKTIMQMVGIVFSCFVW), and 196-216 (GLFFWLLTQLPYYLAAVFSIW).

It belongs to the CDP-alcohol phosphatidyltransferase class-I family.

Its subcellular location is the cell membrane. The enzyme catalyses a CDP-1,2-diacyl-sn-glycerol + sn-glycerol 3-phosphate = a 1,2-diacyl-sn-glycero-3-phospho-(1'-sn-glycero-3'-phosphate) + CMP + H(+). It participates in phospholipid metabolism; phosphatidylglycerol biosynthesis; phosphatidylglycerol from CDP-diacylglycerol: step 1/2. Its function is as follows. This protein catalyzes the committed step to the synthesis of the acidic phospholipids. This is CDP-diacylglycerol--glycerol-3-phosphate 3-phosphatidyltransferase (pgsA) from Mycoplasma genitalium (strain ATCC 33530 / DSM 19775 / NCTC 10195 / G37) (Mycoplasmoides genitalium).